Reading from the N-terminus, the 314-residue chain is Acetyl-coenzyme A carboxylase carboxyl transferase subunit alpha (314 aa).

A CoA carboxyltransferase C-terminal domain is found at 32-289 (EIDMLEASLE…KSAFVAQLDS (258 aa)).

The protein belongs to the AccA family. Acetyl-CoA carboxylase is a heterohexamer composed of biotin carboxyl carrier protein (AccB), biotin carboxylase (AccC) and two subunits each of ACCase subunit alpha (AccA) and ACCase subunit beta (AccD).

Its subcellular location is the cytoplasm. It catalyses the reaction N(6)-carboxybiotinyl-L-lysyl-[protein] + acetyl-CoA = N(6)-biotinyl-L-lysyl-[protein] + malonyl-CoA. The protein operates within lipid metabolism; malonyl-CoA biosynthesis; malonyl-CoA from acetyl-CoA: step 1/1. Functionally, component of the acetyl coenzyme A carboxylase (ACC) complex. First, biotin carboxylase catalyzes the carboxylation of biotin on its carrier protein (BCCP) and then the CO(2) group is transferred by the carboxyltransferase to acetyl-CoA to form malonyl-CoA. This Staphylococcus aureus (strain JH9) protein is Acetyl-coenzyme A carboxylase carboxyl transferase subunit alpha.